We begin with the raw amino-acid sequence, 164 residues long: uncharacterized protein (164 aa).

The helical transmembrane segment at 46-66 threads the bilayer; sequence FIRPNIYLIIFIIIVLLLLYY. Positions 72–137 form a coiled coil; sequence KADKEKEKLE…YNLNKENLRE (66 aa). The span at 76–91 shows a compositional bias: basic and acidic residues; that stretch reads EKEKLEDTDKEFDKST. The tract at residues 76 to 114 is disordered; sequence EKEKLEDTDKEFDKSTNNDTNSKKIYHRQKNSKTLNSSK.

The protein resides in the membrane. This is an uncharacterized protein from Acanthamoeba polyphaga mimivirus (APMV).